The chain runs to 91 residues: Small ribosomal subunit protein bS20 (91 aa).

The protein belongs to the bacterial ribosomal protein bS20 family.

In terms of biological role, binds directly to 16S ribosomal RNA. The sequence is that of Small ribosomal subunit protein bS20 from Caulobacter vibrioides (strain ATCC 19089 / CIP 103742 / CB 15) (Caulobacter crescentus).